A 493-amino-acid polypeptide reads, in one-letter code: Ribosomal protein uS12 methylthiotransferase RimO (493 aa).

The MTTase N-terminal domain maps to 5-121 (RTVALVTLGC…ISDRLQTILN (117 aa)). Residues C14, C50, and C84 each coordinate [4Fe-4S] cluster. Positions 153–177 (LPGHGPTDLPEGVAPASGPRAPLRR) are disordered. The region spanning 179 to 410 (LDGSPVASVK…RLAEELVSQR (232 aa)) is the Radical SAM core domain. 3 residues coordinate [4Fe-4S] cluster: C193, C197, and C200. Positions 412 to 482 (DERVGATVRV…GVDLVAEPLL (71 aa)) constitute a TRAM domain.

It belongs to the methylthiotransferase family. RimO subfamily. [4Fe-4S] cluster serves as cofactor.

Its subcellular location is the cytoplasm. The catalysed reaction is L-aspartate(89)-[ribosomal protein uS12]-hydrogen + (sulfur carrier)-SH + AH2 + 2 S-adenosyl-L-methionine = 3-methylsulfanyl-L-aspartate(89)-[ribosomal protein uS12]-hydrogen + (sulfur carrier)-H + 5'-deoxyadenosine + L-methionine + A + S-adenosyl-L-homocysteine + 2 H(+). Its function is as follows. Catalyzes the methylthiolation of an aspartic acid residue of ribosomal protein uS12. This is Ribosomal protein uS12 methylthiotransferase RimO from Streptomyces coelicolor (strain ATCC BAA-471 / A3(2) / M145).